Consider the following 363-residue polypeptide: MLARNDDTSSYLLVKPVTKKEIYSNDLENGNVKRGASTHSLYLIGDPKFCRNNSSKQKSIIILCGPTASGKSYLGHELAKAYNGEIINIDSMQVYKEIPIITASPPKSYKTEILYHLYNFLSMTEDFSVIKYLKLATEKIKEITDRGKLPILIGGTGLYINSLVFGYNNIPDISEDLREQVRNLHAKIGNIELWGKLEKLDPLAASKINQNDTQRLIRAYEVFMQTNKSIFSFQTLPKEQILPDFNFKIIFLNPERKFLYKTCDERLDKIFKEGAIDEIALIKKQFAPKDYTNWKAVGIKEILAYLNGNLTLDEALNAAQIRTRQYAKRQVTWFKNQIQDKITLEYTNQEEFTQTLKKPFKTI.

Residue 65–72 (GPTASGKS) participates in ATP binding. 67-72 (TASGKS) lines the substrate pocket. Interaction with substrate tRNA regions lie at residues 90–93 (DSMQ) and 214–218 (QRLIR).

Belongs to the IPP transferase family. As to quaternary structure, monomer. Requires Mg(2+) as cofactor.

It carries out the reaction adenosine(37) in tRNA + dimethylallyl diphosphate = N(6)-dimethylallyladenosine(37) in tRNA + diphosphate. In terms of biological role, catalyzes the transfer of a dimethylallyl group onto the adenine at position 37 in tRNAs that read codons beginning with uridine, leading to the formation of N6-(dimethylallyl)adenosine (i(6)A). This is tRNA dimethylallyltransferase from Rickettsia massiliae (strain Mtu5).